Here is a 1052-residue protein sequence, read N- to C-terminus: CCAAT/enhancer-binding protein zeta (1052 aa).

Disordered stretches follow at residues 1–40 (MSAD…KNGF), 122–158 (VENK…VSKA), and 621–677 (SQLD…AEKP). Acidic residues predominate over residues 23 to 34 (EDPDEEDEEDGD). Over residues 122-150 (VENKKQKATEGKKTSEKKVKNKTVAEQRP) the composition is skewed to basic and acidic residues. The span at 627–643 (PESDEENFVDVGDDSDD) shows a compositional bias: acidic residues. Phosphoserine occurs at positions 629 and 641. Over residues 644-677 (EKFTDADKGTATDAVKEVESKETEPESSAEAEKP) the composition is skewed to basic and acidic residues. A Phosphoserine modification is found at Ser837. Positions 876 to 969 (KGAKADLEDS…QGQKKKKKSF (94 aa)) are disordered. Acidic residues predominate over residues 883–932 (EDSESSDGELGDLDDDEVSLGSMNDEDFEIDEDGGTFMDVSDDESEDAPE). Phosphoserine is present on residues Ser958, Ser972, and Ser977. The segment at 1032 to 1052 (KKKKNFRKKMKAPQKPKRQRK) is disordered.

This sequence belongs to the CBF/MAK21 family. As to expression, ubiquitous.

Its subcellular location is the nucleus. Functionally, stimulates transcription from the HSP70 promoter. The chain is CCAAT/enhancer-binding protein zeta (Cebpz) from Mus musculus (Mouse).